Consider the following 301-residue polypeptide: Probable alpha-L-glutamate ligase (301 aa).

In terms of domain architecture, ATP-grasp spans 104–287; sequence LQLLSRRGIG…VAGMIIEHLE (184 aa). Residues K141, 178-179, D187, and 211-213 each bind ATP; these read EY and RSN. Residues D248, E260, and N262 each contribute to the Mg(2+) site. Mn(2+) is bound by residues D248, E260, and N262.

Belongs to the RimK family. Mg(2+) is required as a cofactor. Requires Mn(2+) as cofactor.

This Pseudomonas entomophila (strain L48) protein is Probable alpha-L-glutamate ligase.